We begin with the raw amino-acid sequence, 162 residues long: Selenoprotein F (162 aa).

The signal sequence occupies residues 1-28; it reads MAAEPGGWLGPALGLRLLLATALQMVSA. Residue Sec-93 is a non-standard amino acid, selenocysteine.

It belongs to the selenoprotein M/F family. In terms of assembly, forms a tight complex with UGGT1/UGCGL1. Interacts with UGGT2/UGCGL2. Interacts with RDH11.

The protein resides in the endoplasmic reticulum lumen. Its function is as follows. May be involved in redox reactions associated with the formation of disulfide bonds. May contribute to the quality control of protein folding in the endoplasmic reticulum. May regulate protein folding by enhancing the catalytic activity of UGGT1/UGCGL1 and UGGT2/UGCGL2. In Sus scrofa (Pig), this protein is Selenoprotein F.